The primary structure comprises 1304 residues: Neuronal cell adhesion molecule (1304 aa).

Positions 1-24 are cleaved as a signal peptide; that stretch reads MQLKIMPKKKRLSAGRVPLILFLC. The Extracellular segment spans residues 25–1167; it reads QMISALEVPL…ASRQVDIATQ (1143 aa). Ig-like domains follow at residues 46–134 and 141–235; these read PTIT…AAVS and PSRS…QPIS. Intrachain disulfides connect Cys68–Cys123 and Cys167–Cys218. N-linked (GlcNAc...) asparagine glycosylation occurs at Asn83. N-linked (GlcNAc...) asparagine glycans are attached at residues Asn223, Asn245, Asn251, Asn276, and Asn314. Ig-like domains follow at residues 267-356, 361-448, 454-541, and 545-632; these read PPTF…ISVR, PYWI…AFVN, PRIL…VHLE, and PTWI…AVLS. Disulfide bonds link Cys292–Cys340 and Cys382–Cys432. 2 N-linked (GlcNAc...) asparagine glycosylation sites follow: Asn433 and Asn507. Disulfide bonds link Cys476-Cys525 and Cys567-Cys616. N-linked (GlcNAc...) asparagine glycans are attached at residues Asn619, Asn716, and Asn802. 5 consecutive Fibronectin type-III domains span residues 649–744, 746–843, 848–950, 954–1051, and 1064–1156; these read PPFD…TKAS, PDKN…SGED, APGN…TPEG, APSS…VDEA, and QAVN…TGPA. N-linked (GlcNAc...) (complex) asparagine glycosylation is present at Asn858. N-linked (GlcNAc...) asparagine glycosylation is found at Asn993, Asn1009, Asn1019, Asn1072, Asn1083, and Asn1115. A helical membrane pass occupies residues 1168–1190; the sequence is GWFIGLMCAVALLILILLIVCFI. Residues 1191-1304 are Cytoplasmic-facing; that stretch reads RRNKGGKYPV…SPVNAMNSFV (114 aa). The span at 1199–1219 shows a compositional bias: basic and acidic residues; it reads PVKEKEDAHADPEIQPMKEDD. The segment at 1199–1304 is disordered; sequence PVKEKEDAHA…SPVNAMNSFV (106 aa). The residue at position 1221 (Thr1221) is a Phosphothreonine. Residue Tyr1225 is modified to Phosphotyrosine. At Ser1226 the chain carries Phosphoserine. Basic and acidic residues predominate over residues 1241-1250; it reads PSDRTVKKED. Phosphoserine occurs at positions 1251, 1254, 1271, 1290, 1291, and 1295. The segment covering 1288-1304 has biased composition (polar residues); it reads NESSEAPSPVNAMNSFV.

This sequence belongs to the immunoglobulin superfamily. L1/neurofascin/NgCAM family. As to quaternary structure, constituent of a NFASC/NRCAM/ankyrin-G complex. Detected in a complex with CNTN1 and PTPRB. Interacts with GLDN/gliomedin. Interacts with MYOC. Detected in all the examined tissues. In the brain it was detected in the amygdala, caudate nucleus, corpus callosum, hippocampus, hypothalamus, substantia nigra, subthalamic nucleus and thalamus.

It localises to the cell membrane. The protein localises to the cell projection. The protein resides in the axon. It is found in the secreted. Functionally, cell adhesion protein that is required for normal responses to cell-cell contacts in brain and in the peripheral nervous system. Plays a role in neurite outgrowth in response to contactin binding. Plays a role in mediating cell-cell contacts between Schwann cells and axons. Plays a role in the formation and maintenance of the nodes of Ranvier on myelinated axons. Nodes of Ranvier contain clustered sodium channels that are crucial for the saltatory propagation of action potentials along myelinated axons. During development, nodes of Ranvier are formed by the fusion of two heminodes. Required for normal clustering of sodium channels at heminodes; not required for the formation of mature nodes with normal sodium channel clusters. Required, together with GLDN, for maintaining NFASC and sodium channel clusters at mature nodes of Ranvier. The protein is Neuronal cell adhesion molecule (NRCAM) of Homo sapiens (Human).